The primary structure comprises 227 residues: Large ribosomal subunit protein uL3 (227 aa).

Residues 146-167 (RGPMAHGSKFHRHQGSNGACSS) form a disordered region.

This sequence belongs to the universal ribosomal protein uL3 family. In terms of assembly, part of the 50S ribosomal subunit. Forms a cluster with proteins L14 and L19.

Its function is as follows. One of the primary rRNA binding proteins, it binds directly near the 3'-end of the 23S rRNA, where it nucleates assembly of the 50S subunit. The chain is Large ribosomal subunit protein uL3 from Agathobacter rectalis (strain ATCC 33656 / DSM 3377 / JCM 17463 / KCTC 5835 / VPI 0990) (Eubacterium rectale).